A 376-amino-acid chain; its full sequence is Chaperone protein DnaJ (376 aa).

One can recognise a J domain in the interval 4–70 (DYYQILGVSK…QKRAAYDRFG (67 aa)). The segment at 139–217 (GVEKNISFSS…CHGLGRYHKQ (79 aa)) adopts a CR-type zinc-finger fold. Residues C152, C155, C169, C172, C191, C194, C205, and C208 each contribute to the Zn(2+) site. CXXCXGXG motif repeat units follow at residues 152–159 (CDTCHGSG), 169–176 (CDACGGVG), 191–198 (CHKCQGNG), and 205–212 (CKKCHGLG).

The protein belongs to the DnaJ family. As to quaternary structure, homodimer. Requires Zn(2+) as cofactor.

The protein localises to the cytoplasm. Functionally, participates actively in the response to hyperosmotic and heat shock by preventing the aggregation of stress-denatured proteins and by disaggregating proteins, also in an autonomous, DnaK-independent fashion. Unfolded proteins bind initially to DnaJ; upon interaction with the DnaJ-bound protein, DnaK hydrolyzes its bound ATP, resulting in the formation of a stable complex. GrpE releases ADP from DnaK; ATP binding to DnaK triggers the release of the substrate protein, thus completing the reaction cycle. Several rounds of ATP-dependent interactions between DnaJ, DnaK and GrpE are required for fully efficient folding. Also involved, together with DnaK and GrpE, in the DNA replication of plasmids through activation of initiation proteins. The polypeptide is Chaperone protein DnaJ (Rickettsia bellii (strain OSU 85-389)).